The following is a 381-amino-acid chain: Probable serine/threonine-protein kinase PBL22 (381 aa).

Cys-3 is lipidated: S-palmitoyl cysteine. Thr-64 carries the post-translational modification Phosphothreonine. The 277-residue stretch at 75–351 (FREGNIIGKG…GDVVVAFEYI (277 aa)) folds into the Protein kinase domain. ATP is bound by residues 81–89 (IGKGGFGSV) and Lys-103. Residue Tyr-148 is modified to Phosphotyrosine. Asp-201 acts as the Proton acceptor in catalysis. Ser-235 is subject to Phosphoserine. Phosphothreonine is present on residues Thr-236 and Thr-241. Tyr-249 carries the phosphotyrosine modification. The segment at 361-381 (RRTARKSTDSNRLRRETKQSY) is disordered.

The protein belongs to the protein kinase superfamily. Ser/Thr protein kinase family. Post-translationally, palmitoylation at Cys-3 and Cys-6 are required for plasma membrane location.

The protein resides in the cell membrane. It carries out the reaction L-seryl-[protein] + ATP = O-phospho-L-seryl-[protein] + ADP + H(+). It catalyses the reaction L-threonyl-[protein] + ATP = O-phospho-L-threonyl-[protein] + ADP + H(+). Functionally, may be involved in plant defense signaling. The sequence is that of Probable serine/threonine-protein kinase PBL22 from Arabidopsis thaliana (Mouse-ear cress).